The sequence spans 453 residues: tRNA modification GTPase MnmE (453 aa).

Residues R22, E79, and K119 each coordinate (6S)-5-formyl-5,6,7,8-tetrahydrofolate. The TrmE-type G domain maps to 215 to 376 (GMKVVIAGRP…LREHLKACMG (162 aa)). N225 serves as a coordination point for K(+). Residues 225–230 (NAGKSS), 244–250 (TEIAGTT), 269–272 (DTAG), and 334–337 (NKAD) each bind GTP. S229 contributes to the Mg(2+) binding site. K(+) contacts are provided by T244, I246, and T249. T250 lines the Mg(2+) pocket. A (6S)-5-formyl-5,6,7,8-tetrahydrofolate-binding site is contributed by K453.

This sequence belongs to the TRAFAC class TrmE-Era-EngA-EngB-Septin-like GTPase superfamily. TrmE GTPase family. Homodimer. Heterotetramer of two MnmE and two MnmG subunits. It depends on K(+) as a cofactor.

The protein resides in the cytoplasm. Functionally, exhibits a very high intrinsic GTPase hydrolysis rate. Involved in the addition of a carboxymethylaminomethyl (cmnm) group at the wobble position (U34) of certain tRNAs, forming tRNA-cmnm(5)s(2)U34. This is tRNA modification GTPase MnmE from Aeromonas hydrophila subsp. hydrophila (strain ATCC 7966 / DSM 30187 / BCRC 13018 / CCUG 14551 / JCM 1027 / KCTC 2358 / NCIMB 9240 / NCTC 8049).